The primary structure comprises 339 residues: DNA-directed RNA polymerase subunit alpha (339 aa).

The tract at residues 1–233 (MVREEVAGST…DLFLPFLHAE (233 aa)) is alpha N-terminal domain (alpha-NTD). Positions 264-339 (KKGIPLNCIF…IDLLKNKLSF (76 aa)) are alpha C-terminal domain (alpha-CTD).

It belongs to the RNA polymerase alpha chain family. In plastids the minimal PEP RNA polymerase catalytic core is composed of four subunits: alpha, beta, beta', and beta''. When a (nuclear-encoded) sigma factor is associated with the core the holoenzyme is formed, which can initiate transcription.

The protein resides in the plastid. The protein localises to the chloroplast. The enzyme catalyses RNA(n) + a ribonucleoside 5'-triphosphate = RNA(n+1) + diphosphate. Its function is as follows. DNA-dependent RNA polymerase catalyzes the transcription of DNA into RNA using the four ribonucleoside triphosphates as substrates. The sequence is that of DNA-directed RNA polymerase subunit alpha from Heteranthelium piliferum (Elymus pilifer).